A 168-amino-acid chain; its full sequence is Photosystem I assembly protein Ycf3 (168 aa).

3 TPR repeats span residues 35–68, 72–105, and 120–153; these read AFAY…EMDP, SYIL…NPFL, and GEQA…TPDN.

This sequence belongs to the Ycf3 family.

It is found in the plastid membrane. Functionally, essential for the assembly of the photosystem I (PSI) complex. May act as a chaperone-like factor to guide the assembly of the PSI subunits. This Cuscuta obtusiflora (Peruvian dodder) protein is Photosystem I assembly protein Ycf3.